The sequence spans 146 residues: Transcriptional regulator MraZ (146 aa).

2 consecutive SpoVT-AbrB domains span residues 9–55 (TSAL…PRPV) and 81–124 (AMDV…DAQR).

It belongs to the MraZ family. In terms of assembly, forms oligomers.

Its subcellular location is the cytoplasm. It localises to the nucleoid. The sequence is that of Transcriptional regulator MraZ from Leptothrix cholodnii (strain ATCC 51168 / LMG 8142 / SP-6) (Leptothrix discophora (strain SP-6)).